Consider the following 684-residue polypeptide: Threonine--tRNA ligase (684 aa).

Residues 1-66 (MSTAASPAPA…DADVEVVPVP (66 aa)) form the TGS domain. The interval 261 to 567 (DHRKLGVELD…LTEHYAGAFP (307 aa)) is catalytic. Residues C366, H417, and H544 each coordinate Zn(2+).

It belongs to the class-II aminoacyl-tRNA synthetase family. In terms of assembly, homodimer. Requires Zn(2+) as cofactor.

The protein resides in the cytoplasm. The enzyme catalyses tRNA(Thr) + L-threonine + ATP = L-threonyl-tRNA(Thr) + AMP + diphosphate + H(+). Its function is as follows. Catalyzes the attachment of threonine to tRNA(Thr) in a two-step reaction: L-threonine is first activated by ATP to form Thr-AMP and then transferred to the acceptor end of tRNA(Thr). Also edits incorrectly charged L-seryl-tRNA(Thr). The chain is Threonine--tRNA ligase from Mycobacterium sp. (strain KMS).